The chain runs to 389 residues: Probable family 17 glucosidase SCW10 (389 aa).

An N-terminal signal peptide occupies residues 1-18; that stretch reads MRFSNFLTVSALLTGALG. The propeptide occupies 19–29; that stretch reads APAVRHKHEKR. Residues 70-134 form a disordered region; the sequence is ASQATTSTLE…SSASSSISAS (65 aa). Asparagine 279 is a glycosylation site (N-linked (GlcNAc...) asparagine). The Nucleophile role is filled by glutamate 326.

This sequence belongs to the glycosyl hydrolase 17 family. Glycosylated.

The protein resides in the secreted. It localises to the cell wall. Glucanases possibly play a role in cell expansion during growth, in cell-cell fusion during mating, and in spore release during sporulation. The polypeptide is Probable family 17 glucosidase SCW10 (SCW10) (Saccharomyces cerevisiae (strain ATCC 204508 / S288c) (Baker's yeast)).